Consider the following 93-residue polypeptide: Acylphosphatase (93 aa).

The Acylphosphatase-like domain occupies 5–93 (AKQIVVRGRV…PNFRGFQVTG (89 aa)). Active-site residues include Arg20 and Asn38.

The protein belongs to the acylphosphatase family.

It carries out the reaction an acyl phosphate + H2O = a carboxylate + phosphate + H(+). The protein is Acylphosphatase (acyP) of Lacticaseibacillus paracasei (strain ATCC 334 / BCRC 17002 / CCUG 31169 / CIP 107868 / KCTC 3260 / NRRL B-441) (Lactobacillus paracasei).